The following is a 395-amino-acid chain: tRNA-specific 2-thiouridylase MnmA (395 aa).

ATP-binding positions include 6 to 13 (AMSGGVDS) and leucine 32. Cysteine 101 acts as the Nucleophile in catalysis. Cysteines 101 and 193 form a disulfide. Glycine 125 lines the ATP pocket. The segment at 143–145 (KDQ) is interaction with tRNA. Catalysis depends on cysteine 193, which acts as the Cysteine persulfide intermediate.

Belongs to the MnmA/TRMU family.

It is found in the cytoplasm. It carries out the reaction S-sulfanyl-L-cysteinyl-[protein] + uridine(34) in tRNA + AH2 + ATP = 2-thiouridine(34) in tRNA + L-cysteinyl-[protein] + A + AMP + diphosphate + H(+). Functionally, catalyzes the 2-thiolation of uridine at the wobble position (U34) of tRNA, leading to the formation of s(2)U34. This Corynebacterium jeikeium (strain K411) protein is tRNA-specific 2-thiouridylase MnmA.